The chain runs to 337 residues: Ribosomal RNA small subunit methyltransferase C (337 aa).

It belongs to the methyltransferase superfamily. RsmC family. Monomer.

The protein localises to the cytoplasm. The catalysed reaction is guanosine(1207) in 16S rRNA + S-adenosyl-L-methionine = N(2)-methylguanosine(1207) in 16S rRNA + S-adenosyl-L-homocysteine + H(+). Functionally, specifically methylates the guanine in position 1207 of 16S rRNA in the 30S particle. The chain is Ribosomal RNA small subunit methyltransferase C from Proteus mirabilis (strain HI4320).